The following is a 433-amino-acid chain: Serine hydroxymethyltransferase (433 aa).

Residues Leu132 and 136 to 138 (GHL) contribute to the (6S)-5,6,7,8-tetrahydrofolate site. Lys241 carries the post-translational modification N6-(pyridoxal phosphate)lysine.

The protein belongs to the SHMT family. In terms of assembly, homodimer. The cofactor is pyridoxal 5'-phosphate.

It is found in the cytoplasm. It carries out the reaction (6R)-5,10-methylene-5,6,7,8-tetrahydrofolate + glycine + H2O = (6S)-5,6,7,8-tetrahydrofolate + L-serine. The protein operates within one-carbon metabolism; tetrahydrofolate interconversion. It participates in amino-acid biosynthesis; glycine biosynthesis; glycine from L-serine: step 1/1. Its function is as follows. Catalyzes the reversible interconversion of serine and glycine with tetrahydrofolate (THF) serving as the one-carbon carrier. This reaction serves as the major source of one-carbon groups required for the biosynthesis of purines, thymidylate, methionine, and other important biomolecules. Also exhibits THF-independent aldolase activity toward beta-hydroxyamino acids, producing glycine and aldehydes, via a retro-aldol mechanism. This Nitrobacter winogradskyi (strain ATCC 25391 / DSM 10237 / CIP 104748 / NCIMB 11846 / Nb-255) protein is Serine hydroxymethyltransferase.